A 721-amino-acid chain; its full sequence is Polyphosphate kinase (721 aa).

ATP is bound at residue N47. Residues R377 and R407 each coordinate Mg(2+). The active-site Phosphohistidine intermediate is H437. Positions 471, 567, and 595 each coordinate ATP.

Belongs to the polyphosphate kinase 1 (PPK1) family. The cofactor is Mg(2+). Post-translationally, an intermediate of this reaction is the autophosphorylated ppk in which a phosphate is covalently linked to a histidine residue through a N-P bond.

The enzyme catalyses [phosphate](n) + ATP = [phosphate](n+1) + ADP. Catalyzes the reversible transfer of the terminal phosphate of ATP to form a long-chain polyphosphate (polyP). The protein is Polyphosphate kinase of Exiguobacterium sp. (strain ATCC BAA-1283 / AT1b).